Reading from the N-terminus, the 209-residue chain is MTGKKRSASSSRWLQEHFSDKYVQQAQKKGLRSRAWFKLDEIQQSDKIFKPGMTIVDLGAAPGGWSQYAVTQIGNSGRIIACDLLPMDPIVGVDFLQGDFRDELVLKALLERVGDSKVQVVMSDMAPNMCGTPAVDIPRAMYLVELALEMSRDVLAPGGSFVVKVFQGEGFDEYLREIRSLFTKVKVRKPDSSRARSREVYIVATGRKP.

Residues glycine 63, tryptophan 65, aspartate 83, aspartate 99, and aspartate 124 each contribute to the S-adenosyl-L-methionine site. Lysine 164 acts as the Proton acceptor in catalysis.

It belongs to the class I-like SAM-binding methyltransferase superfamily. RNA methyltransferase RlmE family.

It is found in the cytoplasm. It carries out the reaction uridine(2552) in 23S rRNA + S-adenosyl-L-methionine = 2'-O-methyluridine(2552) in 23S rRNA + S-adenosyl-L-homocysteine + H(+). Specifically methylates the uridine in position 2552 of 23S rRNA at the 2'-O position of the ribose in the fully assembled 50S ribosomal subunit. The polypeptide is Ribosomal RNA large subunit methyltransferase E (Klebsiella pneumoniae (strain 342)).